The chain runs to 358 residues: uncharacterized protein (358 aa).

Positions 1-47 (MGNVAGETRANVIPLHTNRSRVAARRRAGQRAESRQHPSLLSDPNDR) are disordered. Residues 18–29 (NRSRVAARRRAG) are compositionally biased toward basic residues.

It to M.leprae ML2427.

This is an uncharacterized protein from Mycobacterium tuberculosis (strain CDC 1551 / Oshkosh).